Reading from the N-terminus, the 308-residue chain is Porphobilinogen deaminase (308 aa).

Residue cysteine 240 is modified to S-(dipyrrolylmethanemethyl)cysteine.

The protein belongs to the HMBS family. As to quaternary structure, monomer. The cofactor is dipyrromethane.

The catalysed reaction is 4 porphobilinogen + H2O = hydroxymethylbilane + 4 NH4(+). The protein operates within porphyrin-containing compound metabolism; protoporphyrin-IX biosynthesis; coproporphyrinogen-III from 5-aminolevulinate: step 2/4. Functionally, tetrapolymerization of the monopyrrole PBG into the hydroxymethylbilane pre-uroporphyrinogen in several discrete steps. This chain is Porphobilinogen deaminase, found in Laribacter hongkongensis (strain HLHK9).